A 204-amino-acid chain; its full sequence is Thiamine-phosphate synthase (204 aa).

4-amino-2-methyl-5-(diphosphooxymethyl)pyrimidine-binding positions include 35–39 (QVREK) and Asn-67. Residues Asp-68 and Asp-87 each contribute to the Mg(2+) site. Ser-106 contributes to the 4-amino-2-methyl-5-(diphosphooxymethyl)pyrimidine binding site. 132–134 (TPT) contributes to the 2-[(2R,5Z)-2-carboxy-4-methylthiazol-5(2H)-ylidene]ethyl phosphate binding site. Lys-135 lines the 4-amino-2-methyl-5-(diphosphooxymethyl)pyrimidine pocket. Residues Gly-163 and 183–184 (VS) contribute to the 2-[(2R,5Z)-2-carboxy-4-methylthiazol-5(2H)-ylidene]ethyl phosphate site.

This sequence belongs to the thiamine-phosphate synthase family. Requires Mg(2+) as cofactor.

It catalyses the reaction 2-[(2R,5Z)-2-carboxy-4-methylthiazol-5(2H)-ylidene]ethyl phosphate + 4-amino-2-methyl-5-(diphosphooxymethyl)pyrimidine + 2 H(+) = thiamine phosphate + CO2 + diphosphate. The enzyme catalyses 2-(2-carboxy-4-methylthiazol-5-yl)ethyl phosphate + 4-amino-2-methyl-5-(diphosphooxymethyl)pyrimidine + 2 H(+) = thiamine phosphate + CO2 + diphosphate. The catalysed reaction is 4-methyl-5-(2-phosphooxyethyl)-thiazole + 4-amino-2-methyl-5-(diphosphooxymethyl)pyrimidine + H(+) = thiamine phosphate + diphosphate. The protein operates within cofactor biosynthesis; thiamine diphosphate biosynthesis; thiamine phosphate from 4-amino-2-methyl-5-diphosphomethylpyrimidine and 4-methyl-5-(2-phosphoethyl)-thiazole: step 1/1. Its function is as follows. Condenses 4-methyl-5-(beta-hydroxyethyl)thiazole monophosphate (THZ-P) and 2-methyl-4-amino-5-hydroxymethyl pyrimidine pyrophosphate (HMP-PP) to form thiamine monophosphate (TMP). This chain is Thiamine-phosphate synthase, found in Vibrio parahaemolyticus serotype O3:K6 (strain RIMD 2210633).